A 605-amino-acid polypeptide reads, in one-letter code: Indole-3-acetic acid-amido synthetase GH3.8 (605 aa).

AMP contacts are provided by residues S115, 342-346 (MYASS), Y365, D421, and R440.

Belongs to the IAA-amido conjugating enzyme family. As to expression, expressed in the inner floral organs (lodicules, stamens and carpels) and at lower levels in lemmas and paleas.

In terms of biological role, catalyzes the synthesis of indole-3-acetic acid (IAA)-amino acid conjugates, providing a mechanism for the plant to cope with the presence of excessive free auxin. Produces more IAA-Asp levels than IAA-Ala levels in vitro. May participate in the activation of disease resistance by preventing the accumulation of free IAA, which reduces the expression of a group of auxin-responsive genes encoding expansins that control cell wall loosening and expansion. Contributes to late events in stamen and carpel differentiation, and influences floret fertility. This Oryza sativa subsp. indica (Rice) protein is Indole-3-acetic acid-amido synthetase GH3.8 (GH3.8).